Reading from the N-terminus, the 383-residue chain is Na(+)/H(+) antiporter NhaA (383 aa).

The next 11 helical transmembrane spans lie at leucine 10–proline 30, leucine 56–isoleucine 76, isoleucine 91–serine 111, glycine 121–glycine 141, leucine 150–phenylalanine 170, serine 174–asparagine 194, valine 206–alanine 226, proline 254–serine 274, isoleucine 289–phenylalanine 308, glycine 327–phenylalanine 347, and alanine 355–leucine 375.

Belongs to the NhaA Na(+)/H(+) (TC 2.A.33) antiporter family.

Its subcellular location is the cell inner membrane. It carries out the reaction Na(+)(in) + 2 H(+)(out) = Na(+)(out) + 2 H(+)(in). Functionally, na(+)/H(+) antiporter that extrudes sodium in exchange for external protons. The sequence is that of Na(+)/H(+) antiporter NhaA from Francisella tularensis subsp. tularensis (strain SCHU S4 / Schu 4).